A 157-amino-acid chain; its full sequence is Isotocin-neurophysin IT 1 (157 aa).

An N-terminal signal peptide occupies residues 1–20 (MFGTSVSALCLLFLLSVCTA). Cys21 and Cys26 are disulfide-bonded. Gly29 carries the post-translational modification Glycine amide. 7 disulfides stabilise this stretch: Cys42–Cys86, Cys45–Cys59, Cys53–Cys76, Cys60–Cys66, Cys93–Cys106, Cys100–Cys118, and Cys107–Cys112.

The protein belongs to the vasopressin/oxytocin family. In terms of processing, seven disulfide bonds are present in neurophysin.

The protein resides in the secreted. In terms of biological role, isotocin causes contraction of smooth muscles. The sequence is that of Isotocin-neurophysin IT 1 from Oncorhynchus masou (Cherry salmon).